Consider the following 99-residue polypeptide: NADH-quinone oxidoreductase subunit K (99 aa).

3 helical membrane-spanning segments follow: residues 3-23, 28-48, and 59-79; these read PDNY…GVLL, IVMF…FVTF, and VVAF…LAII.

This sequence belongs to the complex I subunit 4L family. As to quaternary structure, NDH-1 is composed of 14 different subunits. Subunits NuoA, H, J, K, L, M, N constitute the membrane sector of the complex.

Its subcellular location is the cell membrane. The enzyme catalyses a quinone + NADH + 5 H(+)(in) = a quinol + NAD(+) + 4 H(+)(out). NDH-1 shuttles electrons from NADH, via FMN and iron-sulfur (Fe-S) centers, to quinones in the respiratory chain. The immediate electron acceptor for the enzyme in this species is believed to be a menaquinone. Couples the redox reaction to proton translocation (for every two electrons transferred, four hydrogen ions are translocated across the cytoplasmic membrane), and thus conserves the redox energy in a proton gradient. The protein is NADH-quinone oxidoreductase subunit K of Mycolicibacterium vanbaalenii (strain DSM 7251 / JCM 13017 / BCRC 16820 / KCTC 9966 / NRRL B-24157 / PYR-1) (Mycobacterium vanbaalenii).